The following is a 103-amino-acid chain: MAVQQKIRIKLKSYDHSLVDKWALRIIDVVKQTDAIIFGPIPLPTKSHVYTVNRSPHVDKKSREQFSFSSHKRLIEIMNPTSRTIDMLMKLELPSGVDVEIKS.

The protein belongs to the universal ribosomal protein uS10 family. As to quaternary structure, part of the 30S ribosomal subunit.

Functionally, involved in the binding of tRNA to the ribosomes. This chain is Small ribosomal subunit protein uS10, found in Chlorobium chlorochromatii (strain CaD3).